The sequence spans 24 residues: Formate ester dehydrogenase gamma chain (24 aa).

As to quaternary structure, heterotrimer composed of an alpha, a beta and a gamma chain.

The chain is Formate ester dehydrogenase gamma chain from Amycolatopsis methanolica.